The chain runs to 211 residues: MTRVALTSAVNLAKKLHDAGIRNQAVLKAISHTPREMFLDNALAHKAYENTALPIGQGQTISQPYIVARMTELLLHKMPQRVLEVGTGSGYQAAILAQLVPQLCTIERIKGLQIQARQRLKRLDLHNVSFKYGDGWLGWANRSPFDAIMVTAAASTIPEALLSQLAEGGVLVLPVGEDTQQLMRITRTADRFSSETIETVKFVPLINGELA.

S62 is an active-site residue.

The protein belongs to the methyltransferase superfamily. L-isoaspartyl/D-aspartyl protein methyltransferase family.

The protein localises to the cytoplasm. It carries out the reaction [protein]-L-isoaspartate + S-adenosyl-L-methionine = [protein]-L-isoaspartate alpha-methyl ester + S-adenosyl-L-homocysteine. Catalyzes the methyl esterification of L-isoaspartyl residues in peptides and proteins that result from spontaneous decomposition of normal L-aspartyl and L-asparaginyl residues. It plays a role in the repair and/or degradation of damaged proteins. The chain is Protein-L-isoaspartate O-methyltransferase from Shewanella baltica (strain OS223).